The chain runs to 702 residues: Lipase maturation factor 2 (702 aa).

The next 8 membrane-spanning stretches (helical) occupy residues leucine 10 to isoleucine 30, alanine 75 to leucine 95, aspartate 164 to valine 184, leucine 226 to isoleucine 246, leucine 259 to valine 279, leucine 316 to leucine 336, valine 363 to leucine 383, and alanine 398 to valine 418. Asparagine 488 is a glycosylation site (N-linked (GlcNAc...) asparagine). The chain crosses the membrane as a helical span at residues isoleucine 636 to alanine 656. The interval leucine 660–lysine 702 is disordered. The span at glutamine 665 to alanine 681 shows a compositional bias: basic and acidic residues. Low complexity predominate over residues alanine 682–arginine 693.

It belongs to the lipase maturation factor family.

The protein localises to the endoplasmic reticulum membrane. Its function is as follows. Involved in the maturation of specific proteins in the endoplasmic reticulum. May be required for maturation and transport of active lipoprotein lipase (LPL) through the secretory pathway. The sequence is that of Lipase maturation factor 2 (Lmf2) from Mus musculus (Mouse).